The sequence spans 142 residues: Maximins y/Hw (142 aa).

The N-terminal stretch at Met1 to Ala18 is a signal peptide. A propeptide spanning residues Arg19–Arg43 is cleaved from the precursor. Phenylalanine amide is present on Phe68. Residues Thr72–Arg121 constitute a propeptide that is removed on maturation. Ile141 is modified (isoleucine amide).

The protein belongs to the bombinin family. Expressed by the skin glands.

It is found in the secreted. Maximin-y shows antimicrobial activity against bacteria and against the fungus C.albicans. It has little hemolytic activity. Functionally, maximin-Hw shows antimicrobial activity against bacteria and against the fungus C.albicans. Shows strong hemolytic activity. The protein is Maximins y/Hw of Bombina maxima (Giant fire-bellied toad).